The following is a 251-amino-acid chain: Malonyl-[acyl-carrier protein] O-methyltransferase (251 aa).

The protein belongs to the methyltransferase superfamily.

It carries out the reaction malonyl-[ACP] + S-adenosyl-L-methionine = malonyl-[ACP] methyl ester + S-adenosyl-L-homocysteine. It functions in the pathway cofactor biosynthesis; biotin biosynthesis. Functionally, converts the free carboxyl group of a malonyl-thioester to its methyl ester by transfer of a methyl group from S-adenosyl-L-methionine (SAM). It allows to synthesize pimeloyl-ACP via the fatty acid synthetic pathway. The sequence is that of Malonyl-[acyl-carrier protein] O-methyltransferase from Enterobacter lignolyticus (strain SCF1).